The primary structure comprises 190 residues: CASP-like protein 1E2 (190 aa).

Over residues 1-12 (MENEGKNNMNGM) the composition is skewed to low complexity. Residues 1–24 (MENEGKNNMNGMEMEKGKRESRSR) form a disordered region. The Cytoplasmic segment spans residues 1–28 (MENEGKNNMNGMEMEKGKRESRSRKGVE). Residues 13–24 (EMEKGKRESRSR) show a composition bias toward basic and acidic residues. A helical transmembrane segment spans residues 29 to 49 (LTMRVLALVLTMAAATVLGVA). At 50-83 (KQTKVVSIKLIPALPPLDITTTAKASYLSAFVYN) the chain is on the extracellular side. The helical transmembrane segment at 84–104 (ISANAIACGYTAISIAILMIS) threads the bilayer. Residues 105-111 (RGRRSKK) are Cytoplasmic-facing. A helical membrane pass occupies residues 112-132 (LLMAVLLGDLVMVALLFSGTG). Residues 133–163 (AASAIGLMGLQGNKHVMWNKVCGVFGKFCHR) are Extracellular-facing. A helical membrane pass occupies residues 164–184 (AAPSLPLTFLAAVVFMFLVVL). Residues 185–190 (DAIKLP) lie on the Cytoplasmic side of the membrane.

It belongs to the Casparian strip membrane proteins (CASP) family. Homodimer and heterodimers.

Its subcellular location is the cell membrane. This is CASP-like protein 1E2 from Arabidopsis lyrata subsp. lyrata (Lyre-leaved rock-cress).